Consider the following 945-residue polypeptide: Netrin receptor UNC5B (945 aa).

The signal sequence occupies residues 1 to 26 (MRARSGVRSALLLALLLCWDPTPSLA). Topologically, residues 27–377 (GVDSAGQVLP…LETSGDVALY (351 aa)) are extracellular. In terms of domain architecture, Ig-like spans 48–145 (PYFLLEPQDA…SGTTKSRRAY (98 aa)). 9 cysteine pairs are disulfide-bonded: Cys69/Cys130, Cys81/Cys128, Cys174/Cys225, Cys258/Cys295, Cys262/Cys299, Cys273/Cys285, Cys314/Cys348, Cys318/Cys353, and Cys326/Cys338. The 90-residue stretch at 153-242 (KNFDQEPLAK…KRRSTTATVI (90 aa)) folds into the Ig-like C2-type domain. Asn222 carries an N-linked (GlcNAc...) asparagine glycan. 2 TSP type-1 domains span residues 246–300 (NGGW…TVCP) and 302–354 (DGAW…GLCV). A glycan (N-linked (GlcNAc...) asparagine) is linked at Asn347. A helical transmembrane segment spans residues 378-398 (AGLVVAVFVVVAVLMAVGVIV). Residues 399-945 (YRRNCRDFDT…LVAMATDGDC (547 aa)) lie on the Cytoplasmic side of the membrane. A lipid anchor (S-palmitoyl cysteine) is attached at Cys403. The ZU5 domain maps to 543 to 686 (SSVSGTFGCL…LGTYVFMGES (144 aa)). Tyr581 carries the post-translational modification Phosphotyrosine. Residues 689-838 (RSAVKRLQLA…AETPAGSLDA (150 aa)) are UPA domain. The interval 707-725 (SLEYSLRVYCLEDTPVALK) is interaction with DCC. The region spanning 865–943 (KICSSLDAPN…EMLVAMATDG (79 aa)) is the Death domain.

Belongs to the unc-5 family. As to quaternary structure, interacts with the cytoplasmic part of DCC. Interacts with GNAI2 via its cytoplasmic part. Interacts (via death domain) with DAPK1 (via death domain). Interacts (via extracellular domain) with FLRT2 and FLRT3 (via extracellular domain), but has higher affinity for FLRT3. Identified in a complex with FLRT3 and ADGRL3; does not interact with ADGRL3 by itself. In terms of processing, phosphorylated on cytoplasmic tyrosine residues. Post-translationally, palmitoylation is required for pro-apoptotic activity, but not for location at lipid rafts. Proteolytically cleaved by caspases during apoptosis. The cleavage does not take place when the receptor is associated with netrin ligand. Its cleavage by caspases is required to induce apoptosis. In terms of tissue distribution, highly expressed in brain. Expressed in lung during late development. Expressed during early blood vessel formation, in the semicircular canal and in a dorsal to ventral gradient in the retina.

The protein resides in the cell membrane. It localises to the membrane raft. Its function is as follows. Receptor for netrin required for axon guidance. Mediates axon repulsion of neuronal growth cones in the developing nervous system upon ligand binding. Axon repulsion in growth cones may be caused by its association with DCC that may trigger signaling for repulsion. Functions as a netrin receptor that negatively regulates vascular branching during angiogenesis. Mediates retraction of tip cell filopodia on endothelial growth cones in response to netrin. It also acts as a dependence receptor required for apoptosis induction when not associated with netrin ligand. Mediates apoptosis by activating DAPK1. In the absence of NTN1, activates DAPK1 by reducing its autoinhibitory phosphorylation at Ser-308 thereby increasing its catalytic activity. The polypeptide is Netrin receptor UNC5B (Unc5b) (Mus musculus (Mouse)).